The sequence spans 359 residues: Putative nucleotidyltransferase MAB21L1 (359 aa).

A ribonucleoside 5'-triphosphate is bound by residues 23-24 (RK) and 63-66 (YEGL). Glutamate 73 and glutamate 75 together coordinate Mg(2+). Residues lysine 248 and 252 to 255 (SILK) each bind a ribonucleoside 5'-triphosphate.

It belongs to the mab-21 family. Monomer. Homodecamer; composed of 2 back to back homopentamers. The protein may exist as monomer in solution and oiligomerizes upon ligand binding.

The protein resides in the nucleus. Its function is as follows. Putative nucleotidyltransferase required for several aspects of embryonic development including normal development of the eye. It is unclear whether it displays nucleotidyltransferase activity in vivo. Binds single-stranded RNA (ssRNA). The sequence is that of Putative nucleotidyltransferase MAB21L1 (MAB21L1) from Bos taurus (Bovine).